A 446-amino-acid chain; its full sequence is Ribosomal protein uS12 methylthiotransferase RimO (446 aa).

The MTTase N-terminal domain occupies 4 to 119 (LKVGLISLGC…LVENINNFIS (116 aa)). [4Fe-4S] cluster contacts are provided by Cys13, Cys48, Cys82, Cys157, Cys161, and Cys164. The Radical SAM core domain maps to 143–373 (TTKSHTAYLR…MMLQKHIIYS (231 aa)). The TRAM domain occupies 376–442 (KYKIGNKYKV…EYDLVGVVYD (67 aa)).

The protein belongs to the methylthiotransferase family. RimO subfamily. [4Fe-4S] cluster is required as a cofactor.

The protein localises to the cytoplasm. The catalysed reaction is L-aspartate(89)-[ribosomal protein uS12]-hydrogen + (sulfur carrier)-SH + AH2 + 2 S-adenosyl-L-methionine = 3-methylsulfanyl-L-aspartate(89)-[ribosomal protein uS12]-hydrogen + (sulfur carrier)-H + 5'-deoxyadenosine + L-methionine + A + S-adenosyl-L-homocysteine + 2 H(+). In terms of biological role, catalyzes the methylthiolation of an aspartic acid residue of ribosomal protein uS12. This Clostridium kluyveri (strain ATCC 8527 / DSM 555 / NBRC 12016 / NCIMB 10680 / K1) protein is Ribosomal protein uS12 methylthiotransferase RimO.